Reading from the N-terminus, the 411-residue chain is Stearoyl-[acyl-carrier-protein] 9-desaturase 2, chloroplastic (411 aa).

The transit peptide at 1 to 44 directs the protein to the chloroplast; it reads MALLLNSTITVAMKQNPLVAVSFPRTTCLGSSFSPPRLLRVSCV. Residues glutamate 148, glutamate 186, histidine 189, glutamate 239, glutamate 272, and histidine 275 each coordinate Fe cation.

Belongs to the fatty acid desaturase type 2 family. In terms of assembly, homodimer. Fe(2+) is required as a cofactor. In terms of tissue distribution, preferentially expressed in roots and flowers.

It is found in the plastid. It localises to the chloroplast. It catalyses the reaction octadecanoyl-[ACP] + 2 reduced [2Fe-2S]-[ferredoxin] + O2 + 2 H(+) = (9Z)-octadecenoyl-[ACP] + 2 oxidized [2Fe-2S]-[ferredoxin] + 2 H2O. It functions in the pathway lipid metabolism; fatty acid metabolism. Its function is as follows. Converts stearoyl-ACP to oleoyl-ACP by introduction of a cis double bond between carbons 9 and 10 of the acyl chain. Exhibits delta-9 palmitoyl-[acyl-carrier-protein] desaturase (PAD) activity. Involved in omega-7 monounsaturated fatty acid biosynthesis, especially in the endosperm oil. The chain is Stearoyl-[acyl-carrier-protein] 9-desaturase 2, chloroplastic (S-ACP-DES2) from Arabidopsis thaliana (Mouse-ear cress).